Reading from the N-terminus, the 269-residue chain is uncharacterized protein (269 aa).

Pro residues predominate over residues M1–K16. Disordered regions lie at residues M1–G110 and I157–Q269. The segment covering A21–S45 has biased composition (polar residues). The span at T46–Q58 shows a compositional bias: low complexity. The segment covering S80 to I93 has biased composition (polar residues). Over residues Q159–P181 the composition is skewed to low complexity. The segment covering L182–S195 has biased composition (polar residues). Over residues P198–I213 the composition is skewed to pro residues.

This is an uncharacterized protein from Dictyostelium discoideum (Social amoeba).